The following is a 134-amino-acid chain: Arsenate reductase (134 aa).

Catalysis depends on nucleophile residues Cys-11, Cys-83, and Cys-90. 2 disulfides stabilise this stretch: Cys-11–Cys-83 and Cys-83–Cys-90.

It belongs to the low molecular weight phosphotyrosine protein phosphatase family. Thioredoxin-coupled ArsC subfamily.

It is found in the cytoplasm. It catalyses the reaction arsenate + [thioredoxin]-dithiol + H(+) = arsenite + [thioredoxin]-disulfide + H2O. Functionally, catalyzes the reduction of arsenate [As(V)] to arsenite [As(III)]. The polypeptide is Arsenate reductase (Bacillus cereus (strain 03BB102)).